We begin with the raw amino-acid sequence, 260 residues long: Probable 6-oxopurine nucleoside phosphorylase (260 aa).

Residues serine 9 and arginine 49–histidine 50 contribute to the phosphate site. Position 182 (methionine 182) interacts with substrate. Threonine 183 lines the phosphate pocket. Asparagine 206–alanine 208 is a binding site for substrate.

Belongs to the PNP/MTAP phosphorylase family. MTAP subfamily. Homohexamer. Dimer of a homotrimer.

It carries out the reaction a purine D-ribonucleoside + phosphate = a purine nucleobase + alpha-D-ribose 1-phosphate. It participates in purine metabolism; purine nucleoside salvage. In terms of biological role, purine nucleoside phosphorylase which is highly specific for 6-oxopurine nucleosides. Cleaves guanosine or inosine to respective bases and sugar-1-phosphate molecules. Involved in purine salvage. In Moorella thermoacetica (strain ATCC 39073 / JCM 9320), this protein is Probable 6-oxopurine nucleoside phosphorylase.